The primary structure comprises 229 residues: MSSLRNAIQRRAHKERAQPESRKKFGLLEKHKDYIVRAKAFHQKEETIRKLKEKASFRNPDEFYFKMINSKTVDGIHRPKPEANKYTEDELMLLKTKDMGYILQGIQSEKKKIEKLSSMLHELDNKRPNKHVYFAEDREEVKEIQSRIEQKSSSLGLDNIPSRIKRKTASSYRELEERKQRVQKLEKLYADMALQKELKKPGRKRKLREDEIENQTSRPVYKWRAQRKR.

Disordered regions lie at residues 1-23 and 199-229; these read MSSLRNAIQRRAHKERAQPESRK and KKPGRKRKLREDEIENQTSRPVYKWRAQRKR.

Belongs to the UTP11 family. In terms of assembly, component of the ribosomal small subunit (SSU) processome.

It is found in the nucleus. The protein resides in the nucleolus. Involved in nucleolar processing of pre-18S ribosomal RNA. This is Probable U3 small nucleolar RNA-associated protein 11 from Oryza sativa subsp. japonica (Rice).